The following is a 798-amino-acid chain: Integrin beta-1-A (798 aa).

Residues 1–21 (MAHYPVFTVGLLTCLVLCINA) form the signal peptide. The Extracellular portion of the chain corresponds to 22–727 (QQGGTECLKA…VKEPECPSGP (706 aa)). The PSI domain occupies 27-77 (ECLKANAKSCGECIQAGPNCGWCTKVDFLQEGEPTSARCDDLAALKSKGCP). 28 cysteine pairs are disulfide-bonded: C28–C46, C36–C464, C39–C65, C49–C76, C206–C212, C260–C300, C400–C414, C434–C462, C466–C486, C477–C489, C491–C500, C502–C533, C516–C531, C525–C536, C538–C553, C555–C576, C560–C574, C568–C579, C581–C590, C592–C615, C599–C613, C607–C618, C620–C630, C633–C636, C640–C691, C646–C665, C649–C661, and C699–C723. The interval 76–106 (CPEDDIQNPRGRKQKLKDIPITSKGKGERMD) is disordered. N109 and N131 each carry an N-linked (GlcNAc...) asparagine glycan. The 239-residue stretch at 139 to 377 (DYPIDLYYLM…QLIIDSYNSL (239 aa)) folds into the VWFA domain. Mg(2+)-binding residues include S151 and S153. The Ca(2+) site is built by S153, D156, D157, and E188. N-linked (GlcNAc...) asparagine glycans are attached at residues N211 and N223. 4 residues coordinate Ca(2+): N243, D245, P247, and E248. E248 contacts Mg(2+). 2 N-linked (GlcNAc...) asparagine glycosylation sites follow: N268 and N362. Residue N416 is glycosylated (N-linked (GlcNAc...) asparagine). I-EGF domains follow at residues 466 to 501 (CQDKGTPNSPECHFGNGTFECGACRCNDGRIGKECE), 502 to 554 (CSTD…KYCE), 555 to 591 (CDNFNCDRSNGLICGGKGICKCRVCECFPNYSGSACD), and 592 to 631 (CSEDTSTCMAKNGQICNGRGICDCGRCKCTDPKFQGPTCE). N481 is a glycosylation site (N-linked (GlcNAc...) asparagine). N-linked (GlcNAc...) asparagine glycosylation occurs at N520. N584 carries N-linked (GlcNAc...) asparagine glycosylation. N669 carries an N-linked (GlcNAc...) asparagine glycan. The helical transmembrane segment at 728–751 (DIIPIVAGVVAGIVLIGLALLLIW) threads the bilayer. Residues 752-798 (KLLMIIHDRREFAKFEKEKMNAKWDTGENPIYKSAVTTVVNPKYEGK) are Cytoplasmic-facing. At Y783 the chain carries Phosphotyrosine.

It belongs to the integrin beta chain family. In terms of assembly, heterodimer of an alpha and a beta subunit.

The protein resides in the cell membrane. The protein localises to the cell projection. Its subcellular location is the invadopodium membrane. It is found in the ruffle membrane. It localises to the melanosome. The protein resides in the cleavage furrow. The protein localises to the lamellipodium. Its subcellular location is the ruffle. Functionally, beta integrins associate with alpha subunits to form receptor complexes that recognize the sequence R-G-D in a wide array of ligands. May be involved in osteoblast compaction. May play role in myoblast differentiation and fusion during skeletal myogenesis. The polypeptide is Integrin beta-1-A (itgb1-a) (Xenopus laevis (African clawed frog)).